A 208-amino-acid polypeptide reads, in one-letter code: Urease accessory protein UreG 2 (208 aa).

Residue 16-23 (GPVGSGKT) participates in GTP binding.

It belongs to the SIMIBI class G3E GTPase family. UreG subfamily. Homodimer. UreD, UreF and UreG form a complex that acts as a GTP-hydrolysis-dependent molecular chaperone, activating the urease apoprotein by helping to assemble the nickel containing metallocenter of UreC. The UreE protein probably delivers the nickel.

It is found in the cytoplasm. In terms of biological role, facilitates the functional incorporation of the urease nickel metallocenter. This process requires GTP hydrolysis, probably effectuated by UreG. In Methylobacterium radiotolerans (strain ATCC 27329 / DSM 1819 / JCM 2831 / NBRC 15690 / NCIMB 10815 / 0-1), this protein is Urease accessory protein UreG 2.